The following is a 250-amino-acid chain: Manganese transport system ATP-binding protein MntB (250 aa).

The ABC transporter domain maps to valine 4–leucine 236. Residue glycine 36–serine 43 participates in ATP binding.

It belongs to the ABC transporter superfamily. In terms of assembly, the complex is probably composed of two ATP-binding proteins (MntB), two transmembrane proteins (MntC and MntD) and a solute-binding protein (MntA).

Its subcellular location is the cell membrane. In terms of biological role, probably part of the ABC transporter complex MntABCD involved in manganese import. Probably responsible for energy coupling to the transport system. The sequence is that of Manganese transport system ATP-binding protein MntB from Bacillus subtilis (strain 168).